Consider the following 469-residue polypeptide: Putative dipeptidase SAB1611c (469 aa).

Position 84 (H84) interacts with Zn(2+). The active site involves D86. Residue D115 participates in Zn(2+) binding. The active-site Proton acceptor is E149. The Zn(2+) site is built by E150, D173, and H440.

It belongs to the peptidase M20A family. Requires Zn(2+) as cofactor.

The chain is Putative dipeptidase SAB1611c from Staphylococcus aureus (strain bovine RF122 / ET3-1).